A 262-amino-acid chain; its full sequence is MDPLALLRKAGLEAEGPALPLHGGDISRVWRVGRFVVKTAQDPPPGLFRAEARGLQALAERGVRVPRVHWVGEEGLVLAYLEPGPEDWEGLARTLAALHRRREGSYLAEPGFLGTFPLPGREGGEWTAFFYERCVLPLLEATWDRLQGLGPKVEALYQRPLPAEGPAPLHGDLWHGNVYFAREGPALLDPSFFVGERGVDLAMMRLFGGFPRRFWEVYGELYPVPEEVERALPRYQVYYLLAHVHFFGQGYLGALWRAISAS.

An ATP-binding site is contributed by 79 to 81; it reads AYL. The active-site Proton acceptor is aspartate 172.

It belongs to the fructosamine kinase family.

The catalysed reaction is N(6)-(D-ribulosyl)-L-lysine + ATP = N(6)-(3-O-phospho-D-ribulosyl)-L-lysine + ADP + H(+). It carries out the reaction N(6)-(D-erythrulosyl)-L-lysine + ATP = N(6)-(3-O-phospho-D-erythrulosyl)-L-lysine + ADP + H(+). The enzyme catalyses N(6)-D-ribulosyl-L-lysyl-[protein] + ATP = N(6)-(3-O-phospho-D-ribulosyl)-L-lysyl-[protein] + ADP + H(+). It catalyses the reaction N(6)-(D-erythrulosyl)-L-lysyl-[protein] + ATP = N(6)-(3-O-phospho-D-erythrulosyl)-L-lysyl-[protein] + ADP + H(+). Functionally, ketoamine kinase that phosphorylates ketoamines, such as erythruloselysine and ribuloselysine, on the third carbon of the sugar moiety to generate ketoamine 3-phosphate. Has higher activity on free lysine (erythruloselysine and ribuloselysine), than on ribuloselysine and erythruloselysine residues on glycated proteins. The chain is Probable ketoamine kinase TTHA1179 from Thermus thermophilus (strain ATCC 27634 / DSM 579 / HB8).